The chain runs to 513 residues: ATP synthase subunit alpha (513 aa).

Residue 169-176 (GDRQTGKT) participates in ATP binding.

The protein belongs to the ATPase alpha/beta chains family. F-type ATPases have 2 components, CF(1) - the catalytic core - and CF(0) - the membrane proton channel. CF(1) has five subunits: alpha(3), beta(3), gamma(1), delta(1), epsilon(1). CF(0) has three main subunits: a(1), b(2) and c(9-12). The alpha and beta chains form an alternating ring which encloses part of the gamma chain. CF(1) is attached to CF(0) by a central stalk formed by the gamma and epsilon chains, while a peripheral stalk is formed by the delta and b chains.

The protein resides in the cell inner membrane. It catalyses the reaction ATP + H2O + 4 H(+)(in) = ADP + phosphate + 5 H(+)(out). In terms of biological role, produces ATP from ADP in the presence of a proton gradient across the membrane. The alpha chain is a regulatory subunit. The protein is ATP synthase subunit alpha of Salmonella agona (strain SL483).